Here is a 605-residue protein sequence, read N- to C-terminus: Alanine--tRNA ligase (605 aa).

His463, His467, Cys565, and His569 together coordinate Zn(2+).

The protein belongs to the class-II aminoacyl-tRNA synthetase family. Requires Zn(2+) as cofactor.

The protein resides in the cytoplasm. It catalyses the reaction tRNA(Ala) + L-alanine + ATP = L-alanyl-tRNA(Ala) + AMP + diphosphate. Functionally, catalyzes the attachment of alanine to tRNA(Ala) in a two-step reaction: alanine is first activated by ATP to form Ala-AMP and then transferred to the acceptor end of tRNA(Ala). Also edits incorrectly charged Ser-tRNA(Ala) and Gly-tRNA(Ala) via its editing domain. The polypeptide is Alanine--tRNA ligase (alaS) (Treponema pallidum (strain Nichols)).